The sequence spans 420 residues: Glucose-1-phosphate adenylyltransferase (420 aa).

Alpha-D-glucose 1-phosphate contacts are provided by residues Tyr-97, Gly-162, 177-178 (EK), and Ser-188.

Belongs to the bacterial/plant glucose-1-phosphate adenylyltransferase family. In terms of assembly, homotetramer.

The enzyme catalyses alpha-D-glucose 1-phosphate + ATP + H(+) = ADP-alpha-D-glucose + diphosphate. Its pathway is glycan biosynthesis; glycogen biosynthesis. Its function is as follows. Involved in the biosynthesis of ADP-glucose, a building block required for the elongation reactions to produce glycogen. Catalyzes the reaction between ATP and alpha-D-glucose 1-phosphate (G1P) to produce pyrophosphate and ADP-Glc. The sequence is that of Glucose-1-phosphate adenylyltransferase from Pseudothermotoga lettingae (strain ATCC BAA-301 / DSM 14385 / NBRC 107922 / TMO) (Thermotoga lettingae).